Consider the following 428-residue polypeptide: Probable pectin lyase F (428 aa).

An N-terminal signal peptide occupies residues Met1–Ala20. Cys83 and Cys107 are joined by a disulfide. The active site involves Arg257. Asn276 is a glycosylation site (N-linked (GlcNAc...) asparagine). Cysteines 324 and 332 form a disulfide. The interval Gly383–Tyr428 is disordered. The span at Ala389 to Tyr417 shows a compositional bias: low complexity. Positions Ala418–Tyr428 are enriched in basic residues.

It belongs to the polysaccharide lyase 1 family.

It localises to the secreted. It carries out the reaction Eliminative cleavage of (1-&gt;4)-alpha-D-galacturonan methyl ester to give oligosaccharides with 4-deoxy-6-O-methyl-alpha-D-galact-4-enuronosyl groups at their non-reducing ends.. Functionally, pectinolytic enzymes consist of four classes of enzymes: pectin lyase, polygalacturonase, pectin methylesterase and rhamnogalacturonase. Among pectinolytic enzymes, pectin lyase is the most important in depolymerization of pectin, since it cleaves internal glycosidic bonds of highly methylated pectins. The protein is Probable pectin lyase F (pelF) of Aspergillus oryzae (strain ATCC 42149 / RIB 40) (Yellow koji mold).